A 344-amino-acid chain; its full sequence is Cathepsin B-like cysteine proteinase 5 (344 aa).

The first 15 residues, 1-15, serve as a signal peptide directing secretion; that stretch reads MWKLSAILLVAAASA. Positions 16–81 are excised as a propeptide; the sequence is VVIPGHREAP…DIVATEVSDA (66 aa). 6 cysteine pairs are disulfide-bonded: Cys-95–Cys-124, Cys-107–Cys-154, Cys-143–Cys-213, Cys-144–Cys-150, Cys-183–Cys-217, and Cys-191–Cys-203. Residue Cys-110 is part of the active site. Residues His-286 and Asn-306 contribute to the active site.

The protein belongs to the peptidase C1 family.

This chain is Cathepsin B-like cysteine proteinase 5 (cpr-5), found in Caenorhabditis elegans.